The following is a 217-amino-acid chain: Octanoyltransferase (217 aa).

A BPL/LPL catalytic domain is found at 32 to 207 (SESHDELWIV…TFSQLLGYQH (176 aa)). Substrate-binding positions include 71-78 (RGGQVTYH), 138-140 (SLG), and 151-153 (GLA). The Acyl-thioester intermediate role is filled by Cys-169.

It belongs to the LipB family.

The protein resides in the cytoplasm. The catalysed reaction is octanoyl-[ACP] + L-lysyl-[protein] = N(6)-octanoyl-L-lysyl-[protein] + holo-[ACP] + H(+). Its pathway is protein modification; protein lipoylation via endogenous pathway; protein N(6)-(lipoyl)lysine from octanoyl-[acyl-carrier-protein]: step 1/2. In terms of biological role, catalyzes the transfer of endogenously produced octanoic acid from octanoyl-acyl-carrier-protein onto the lipoyl domains of lipoate-dependent enzymes. Lipoyl-ACP can also act as a substrate although octanoyl-ACP is likely to be the physiological substrate. The sequence is that of Octanoyltransferase from Shewanella baltica (strain OS155 / ATCC BAA-1091).